The primary structure comprises 248 residues: 5'-nucleotidase SurE (248 aa).

Residues Asp8, Asp9, Ser39, and Asn91 each coordinate a divalent metal cation.

The protein belongs to the SurE nucleotidase family. It depends on a divalent metal cation as a cofactor.

The protein localises to the cytoplasm. It carries out the reaction a ribonucleoside 5'-phosphate + H2O = a ribonucleoside + phosphate. Functionally, nucleotidase that shows phosphatase activity on nucleoside 5'-monophosphates. This is 5'-nucleotidase SurE from Neisseria meningitidis serogroup B (strain ATCC BAA-335 / MC58).